Consider the following 421-residue polypeptide: Type II methyltransferase M.TaqI (421 aa).

Over residues 1-18 (MGLPPLLSLPSNSAPRSL) the composition is skewed to low complexity. Residues 1–20 (MGLPPLLSLPSNSAPRSLGR) are disordered. Residues Thr-23, 45 to 48 (EPAC), Glu-71, Asp-89, and Pro-107 contribute to the S-adenosyl-L-methionine site.

It belongs to the N(4)/N(6)-methyltransferase family.

The enzyme catalyses a 2'-deoxyadenosine in DNA + S-adenosyl-L-methionine = an N(6)-methyl-2'-deoxyadenosine in DNA + S-adenosyl-L-homocysteine + H(+). In terms of biological role, a gamma subtype methylase that recognizes the double-stranded sequence 5'-TCGA-3', methylates A-4 on both strands and protects the DNA from cleavage by the TaqI endonuclease. The chain is Type II methyltransferase M.TaqI (taqIM) from Thermus aquaticus.